We begin with the raw amino-acid sequence, 528 residues long: Nucleoporin ASM4 (528 aa).

The FG 1 repeat unit spans residues 2–3 (FG). Low complexity predominate over residues 23-50 (TTQMFQSQSQLQPQPQPQPQQQQQHLQF). Disordered regions lie at residues 23 to 64 (TTQM…FGNS) and 88 to 144 (IKNG…SMNA). Composition is skewed to polar residues over residues 51-64 (NGSS…FGNS) and 97-108 (QHGQGNNPSWVN). One copy of the FG 2 repeat lies at 61 to 62 (FG). The segment covering 110–125 (PKKRFTPHTVIRRKTT) has biased composition (basic residues). Low complexity predominate over residues 127 to 141 (QNSSSDINQNDDSSS). FG repeat units lie at residues 195 to 196 (FG), 274 to 275 (FG), and 291 to 292 (FG). Residues 265-394 (SSSLSAIIVF…IPYSKNAVEQ (130 aa)) enclose the RRM Nup35-type domain. Phosphoserine is present on residues S458 and S464. Residues 490-510 (NLLRNLESKMRQQEAKYRNNE) are a coiled coil. An FG 6 repeat occupies 523-524 (FG).

In terms of assembly, component of the nuclear pore complex (NPC). NPC constitutes the exclusive means of nucleocytoplasmic transport. NPCs allow the passive diffusion of ions and small molecules and the active, nuclear transport receptor-mediated bidirectional transport of macromolecules such as proteins, RNAs, ribonucleoparticles (RNPs), and ribosomal subunits across the nuclear envelope. Due to its 8-fold rotational symmetry, all subunits are present with 8 copies or multiples thereof. ASM4 may form a subcomplex with NUP53, NDC1, and NUP170. Phosphorylated by CDC28.

It is found in the nucleus. The protein resides in the nuclear pore complex. Its subcellular location is the nucleus membrane. In terms of biological role, functions as a component of the nuclear pore complex (NPC). NPC components, collectively referred to as nucleoporins (NUPs), can play the role of both NPC structural components and of docking or interaction partners for transiently associated nuclear transport factors. Active directional transport is assured by both, a Phe-Gly (FG) repeat affinity gradient for these transport factors across the NPC and a transport cofactor concentration gradient across the nuclear envelope (GSP1 and GSP2 GTPases associated predominantly with GTP in the nucleus, with GDP in the cytoplasm). May have a mitosis control function. This chain is Nucleoporin ASM4 (ASM4), found in Saccharomyces cerevisiae (strain ATCC 204508 / S288c) (Baker's yeast).